Reading from the N-terminus, the 120-residue chain is Large ribosomal subunit protein bL12 (120 aa).

The protein belongs to the bacterial ribosomal protein bL12 family. As to quaternary structure, homodimer. Part of the ribosomal stalk of the 50S ribosomal subunit. Forms a multimeric L10(L12)X complex, where L10 forms an elongated spine to which 2 to 4 L12 dimers bind in a sequential fashion. Binds GTP-bound translation factors.

Functionally, forms part of the ribosomal stalk which helps the ribosome interact with GTP-bound translation factors. Is thus essential for accurate translation. The sequence is that of Large ribosomal subunit protein bL12 from Lachnoclostridium phytofermentans (strain ATCC 700394 / DSM 18823 / ISDg) (Clostridium phytofermentans).